The sequence spans 278 residues: Elongation factor Ts (278 aa).

The tract at residues 82–85 (TDFV) is involved in Mg(2+) ion dislocation from EF-Tu.

Belongs to the EF-Ts family.

It localises to the cytoplasm. Its function is as follows. Associates with the EF-Tu.GDP complex and induces the exchange of GDP to GTP. It remains bound to the aminoacyl-tRNA.EF-Tu.GTP complex up to the GTP hydrolysis stage on the ribosome. The polypeptide is Elongation factor Ts (Streptomyces avermitilis (strain ATCC 31267 / DSM 46492 / JCM 5070 / NBRC 14893 / NCIMB 12804 / NRRL 8165 / MA-4680)).